The primary structure comprises 240 residues: 1-(5-phosphoribosyl)-5-[(5-phosphoribosylamino)methylideneamino] imidazole-4-carboxamide isomerase (240 aa).

Catalysis depends on Asp-8, which acts as the Proton acceptor. Asp-129 functions as the Proton donor in the catalytic mechanism.

This sequence belongs to the HisA/HisF family.

The protein resides in the cytoplasm. It carries out the reaction 1-(5-phospho-beta-D-ribosyl)-5-[(5-phospho-beta-D-ribosylamino)methylideneamino]imidazole-4-carboxamide = 5-[(5-phospho-1-deoxy-D-ribulos-1-ylimino)methylamino]-1-(5-phospho-beta-D-ribosyl)imidazole-4-carboxamide. Its pathway is amino-acid biosynthesis; L-histidine biosynthesis; L-histidine from 5-phospho-alpha-D-ribose 1-diphosphate: step 4/9. This is 1-(5-phosphoribosyl)-5-[(5-phosphoribosylamino)methylideneamino] imidazole-4-carboxamide isomerase from Oceanobacillus iheyensis (strain DSM 14371 / CIP 107618 / JCM 11309 / KCTC 3954 / HTE831).